The chain runs to 314 residues: Secreted frizzled-related protein 1 (314 aa).

Residues 1–31 form the signal peptide; sequence MGIGRSEGGRRGAALGVLLALGAALLAVGSA. The FZ domain occupies 53-169; it reads TKPPQCVDIP…FPEGDVCIAM (117 aa). 5 cysteine pairs are disulfide-bonded: cysteine 58–cysteine 121, cysteine 68–cysteine 114, cysteine 105–cysteine 140, cysteine 129–cysteine 166, and cysteine 133–cysteine 157. Asparagine 173 carries N-linked (GlcNAc...) asparagine glycosylation. 3 disulfide bridges follow: cysteine 186-cysteine 256, cysteine 189-cysteine 258, and cysteine 203-cysteine 306. The NTR domain occupies 186–306; the sequence is CPPCDNELKS…FMKKMKNHEC (121 aa).

The protein belongs to the secreted frizzled-related protein (sFRP) family. As to quaternary structure, interacts with WNT1, WNT2 and FRZD6. Interacts with WNT4, WNT8 and MYOC. In terms of tissue distribution, widely expressed. Absent from lung, liver and peripheral blood leukocytes. Highest levels in heart and fetal kidney. Also expressed in testis, ovary, fetal brain and lung, leiomyomal cells, myometrial cells and vascular smooth muscle cells. Expressed in foreskin fibroblasts and in keratinocytes.

The protein resides in the secreted. In terms of biological role, soluble frizzled-related proteins (sFRPS) function as modulators of Wnt signaling through direct interaction with Wnts. They have a role in regulating cell growth and differentiation in specific cell types. SFRP1 decreases intracellular beta-catenin levels. Has antiproliferative effects on vascular cells, in vitro and in vivo, and can induce, in vivo, an angiogenic response. In vascular cell cycle, delays the G1 phase and entry into the S phase. In kidney development, inhibits tubule formation and bud growth in metanephroi. Inhibits WNT1/WNT4-mediated TCF-dependent transcription. This chain is Secreted frizzled-related protein 1 (SFRP1), found in Homo sapiens (Human).